A 237-amino-acid polypeptide reads, in one-letter code: UPF0280 protein Mbur_0309 (237 aa).

This sequence belongs to the UPF0280 family.

The protein is UPF0280 protein Mbur_0309 of Methanococcoides burtonii (strain DSM 6242 / NBRC 107633 / OCM 468 / ACE-M).